We begin with the raw amino-acid sequence, 548 residues long: Membrane protein insertase YidC (548 aa).

A helical transmembrane segment spans residues N6–D26. The interval N28 to G56 is disordered. The span at P29–T42 shows a compositional bias: low complexity. Transmembrane regions (helical) follow at residues F350–Y370, F424–I444, L458–I478, and P499–V519.

It belongs to the OXA1/ALB3/YidC family. Type 1 subfamily. Interacts with the Sec translocase complex via SecD. Specifically interacts with transmembrane segments of nascent integral membrane proteins during membrane integration.

It is found in the cell inner membrane. Functionally, required for the insertion and/or proper folding and/or complex formation of integral membrane proteins into the membrane. Involved in integration of membrane proteins that insert both dependently and independently of the Sec translocase complex, as well as at least some lipoproteins. Aids folding of multispanning membrane proteins. The polypeptide is Membrane protein insertase YidC (Salmonella paratyphi C (strain RKS4594)).